Here is a 79-residue protein sequence, read N- to C-terminus: Small ribosomal subunit protein uS17 (79 aa).

Belongs to the universal ribosomal protein uS17 family. Part of the 30S ribosomal subunit.

Functionally, one of the primary rRNA binding proteins, it binds specifically to the 5'-end of 16S ribosomal RNA. This chain is Small ribosomal subunit protein uS17, found in Bartonella quintana (strain Toulouse) (Rochalimaea quintana).